The following is a 589-amino-acid chain: Serine/threonine-protein phosphatase 2A 65 kDa regulatory subunit A alpha isoform (589 aa).

Residue Ala2 is modified to N-acetylalanine. HEAT repeat units follow at residues Asp8–Arg46, Thr47–Glu84, Tyr85–Asp123, Leu124–Ala161, Val162–Asn200, Val201–Asp239, Leu240–Ile278, Thr279–Val321, Ile322–Asn360, Thr361–Gln399, Leu400–Phe438, Phe439–Trp477, Ala478–Ile516, Thr517–Thr555, and Leu556–Ala589. Residues Asp8 to Gln399 are PP2A subunit B binding. The interval Thr47–Val321 is polyoma small and medium T antigens Binding. The interval Tyr85–Asp239 is SV40 small T antigen binding. N6-acetyllysine is present on Lys280. The PP2A subunit C binding stretch occupies residues Leu400–Ala589.

It belongs to the phosphatase 2A regulatory subunit A family. In terms of assembly, PP2A consists of a common heterodimeric core enzyme, composed of PPP2CA a 36 kDa catalytic subunit (subunit C) and PPP2R1A a 65 kDa constant regulatory subunit (PR65 or subunit A), that associates with a variety of regulatory subunits. Proteins that associate with the core dimer include three families of regulatory subunits B (the R2/B/PR55/B55, R3/B''/PR72/PR130/PR59 and R5/B'/B56 families), the 48 kDa variable regulatory subunit, viral proteins, and cell signaling molecules. Found in a complex with at least ARL2, PPP2CB, PPP2R1A, PPP2R2A, PPP2R5E and TBCD. Interacts with the PP2A C catalytic subunit PPP2CA. Interacts with the PP2A B subunit PPP2R2A. Interacts with the PP2A B subunit PPP2R5D. Interacts with FOXO1; the interaction dephosphorylates FOXO1 on AKT-mediated phosphorylation sites. Interacts with IPO9. Interacts with TP53 and SGO1. Interacts with PLA2G16; this interaction might decrease PP2A activity. Interacts with CTTNBP2NL. Interacts with GNA12; the interaction promotes protein phosphatase 2A activation causing dephosphorylation of MAPT. Interacts with CIP2A; this interaction stabilizes CIP2A. Interacts with PABIR1/FAM122A. Interacts with ADCY8; antagonizes interaction between ADCY8 and calmodulin. Interacts with CRTC3 (when phosphorylated at 'Ser-391'). Interacts with SPRY2. Part of the core of STRIPAK complexes composed of PP2A catalytic and scaffolding subunits, the striatins (PP2A regulatory subunits), the striatin-associated proteins MOB4, STRIP1 and STRIP2, PDCD10 and members of the STE20 kinases, such as STK24 and STK26. Component of the Integrator-PP2A (INTAC) complex, composed of the Integrator core complex and protein phosphatase 2A subunits PPP2CA and PPP2R1A. (Microbial infection) Interacts with JC virus small t antigen; this interaction inhibits PPP2R1A activity.

The protein resides in the cytoplasm. Its subcellular location is the nucleus. It is found in the chromosome. The protein localises to the centromere. It localises to the lateral cell membrane. The protein resides in the cell projection. Its subcellular location is the dendrite. Functionally, the PR65 subunit of protein phosphatase 2A serves as a scaffolding molecule to coordinate the assembly of the catalytic subunit and a variable regulatory B subunit. Upon interaction with GNA12 promotes dephosphorylation of microtubule associated protein TAU/MAPT. Required for proper chromosome segregation and for centromeric localization of SGO1 in mitosis. Together with RACK1 adapter, mediates dephosphorylation of AKT1 at 'Ser-473', preventing AKT1 activation and AKT-mTOR signaling pathway. Dephosphorylation of AKT1 is essential for regulatory T-cells (Treg) homeostasis and stability. Part of the striatin-interacting phosphatase and kinase (STRIPAK) complexes. STRIPAK complexes have critical roles in protein (de)phosphorylation and are regulators of multiple signaling pathways including Hippo, MAPK, nuclear receptor and cytoskeleton remodeling. Different types of STRIPAK complexes are involved in a variety of biological processes such as cell growth, differentiation, apoptosis, metabolism and immune regulation. Key mediator of a quality checkpoint during transcription elongation as part of the Integrator-PP2A (INTAC) complex. The INTAC complex drives premature transcription termination of transcripts that are unfavorably configured for transcriptional elongation: within the INTAC complex, acts as a scaffolding subunit for PPP2CA, which catalyzes dephosphorylation of the C-terminal domain (CTD) of Pol II subunit POLR2A/RPB1 and SUPT5H/SPT5, thereby preventing transcriptional elongation. Regulates the recruitment of the SKA complex to kinetochores. This is Serine/threonine-protein phosphatase 2A 65 kDa regulatory subunit A alpha isoform from Homo sapiens (Human).